Here is a 285-residue protein sequence, read N- to C-terminus: ATP synthase gamma chain (285 aa).

The protein belongs to the ATPase gamma chain family. As to quaternary structure, F-type ATPases have 2 components, CF(1) - the catalytic core - and CF(0) - the membrane proton channel. CF(1) has five subunits: alpha(3), beta(3), gamma(1), delta(1), epsilon(1). CF(0) has three main subunits: a, b and c.

Its subcellular location is the cell membrane. Produces ATP from ADP in the presence of a proton gradient across the membrane. The gamma chain is believed to be important in regulating ATPase activity and the flow of protons through the CF(0) complex. This Dehalococcoides mccartyi (strain ATCC BAA-2100 / JCM 16839 / KCTC 5957 / BAV1) protein is ATP synthase gamma chain.